The sequence spans 294 residues: 33 kDa chaperonin (294 aa).

2 disulfides stabilise this stretch: cysteine 237–cysteine 239 and cysteine 270–cysteine 273.

This sequence belongs to the HSP33 family. In terms of processing, under oxidizing conditions two disulfide bonds are formed involving the reactive cysteines. Under reducing conditions zinc is bound to the reactive cysteines and the protein is inactive.

The protein localises to the cytoplasm. Its function is as follows. Redox regulated molecular chaperone. Protects both thermally unfolding and oxidatively damaged proteins from irreversible aggregation. Plays an important role in the bacterial defense system toward oxidative stress. This chain is 33 kDa chaperonin, found in Geobacillus kaustophilus (strain HTA426).